The following is a 1407-amino-acid chain: DNA-directed RNA polymerase subunit beta' (1407 aa).

Zn(2+) contacts are provided by Cys70, Cys72, Cys85, and Cys88. Mg(2+) contacts are provided by Asp460, Asp462, and Asp464. Zn(2+) is bound by residues Cys814, Cys888, Cys895, and Cys898.

This sequence belongs to the RNA polymerase beta' chain family. The RNAP catalytic core consists of 2 alpha, 1 beta, 1 beta' and 1 omega subunit. When a sigma factor is associated with the core the holoenzyme is formed, which can initiate transcription. The cofactor is Mg(2+). Zn(2+) serves as cofactor.

It catalyses the reaction RNA(n) + a ribonucleoside 5'-triphosphate = RNA(n+1) + diphosphate. Its function is as follows. DNA-dependent RNA polymerase catalyzes the transcription of DNA into RNA using the four ribonucleoside triphosphates as substrates. The chain is DNA-directed RNA polymerase subunit beta' from Pectobacterium atrosepticum (strain SCRI 1043 / ATCC BAA-672) (Erwinia carotovora subsp. atroseptica).